The sequence spans 384 residues: Cysteine protease ATG4B (384 aa).

Residue Cys74 is the Nucleophile of the active site. Active-site residues include Asp269 and His271. Positions 379-382 (FEIL) match the LIR motif.

This sequence belongs to the peptidase C54 family.

It localises to the cytoplasm. Its subcellular location is the cytosol. The protein resides in the cytoplasmic vesicle. The protein localises to the autophagosome. It is found in the endoplasmic reticulum. It localises to the mitochondrion. The enzyme catalyses [protein]-C-terminal L-amino acid-glycyl-phosphatidylethanolamide + H2O = [protein]-C-terminal L-amino acid-glycine + a 1,2-diacyl-sn-glycero-3-phosphoethanolamine. It catalyses the reaction [protein]-C-terminal L-amino acid-glycyl-phosphatidylserine + H2O = [protein]-C-terminal L-amino acid-glycine + a 1,2-diacyl-sn-glycero-3-phospho-L-serine. In terms of biological role, cysteine protease that plays a key role in autophagy by mediating both proteolytic activation and delipidation of ATG8 family proteins. Required for canonical autophagy (macroautophagy), non-canonical autophagy as well as for mitophagy. The protease activity is required for proteolytic activation of ATG8 family proteins: cleaves the C-terminal amino acid of ATG8 proteins to reveal a C-terminal glycine. Exposure of the glycine at the C-terminus is essential for ATG8 proteins conjugation to phosphatidylethanolamine (PE) and insertion to membranes, which is necessary for autophagy. Protease activity is also required to counteract formation of high-molecular weight conjugates of ATG8 proteins (ATG8ylation): acts as a deubiquitinating-like enzyme that removes ATG8 conjugated to other proteins, such as ATG3. In addition to the protease activity, also mediates delipidation of ATG8 family proteins. Catalyzes delipidation of PE-conjugated forms of ATG8 proteins during macroautophagy. Also involved in non-canonical autophagy, a parallel pathway involving conjugation of ATG8 proteins to single membranes at endolysosomal compartments, by catalyzing delipidation of ATG8 proteins conjugated to phosphatidylserine (PS). This Xenopus laevis (African clawed frog) protein is Cysteine protease ATG4B.